A 219-amino-acid polypeptide reads, in one-letter code: Flagellar biosynthetic protein FliZ (219 aa).

Residues 1–26 form the signal peptide; sequence MKKSQYFIVFICFFVLFSVHPIAAAA. The span at 41–61 shows a compositional bias: basic and acidic residues; sequence KDEKTADQSEQKKEKTTKTAD. Positions 41–62 are disordered; sequence KDEKTADQSEQKKEKTTKTADE. A helical membrane pass occupies residues 71-96; it reads VSAFDFVKMIFALLFVIVLIYGLVKL. Positions 200–212 are enriched in basic and acidic residues; it reads LEELKQNRSEGKK. The disordered stretch occupies residues 200 to 219; that stretch reads LEELKQNRSEGKKKGPRHHE.

The protein localises to the cell membrane. In terms of biological role, may be a structural component of the flagellum that anchors the rod to the membrane. The polypeptide is Flagellar biosynthetic protein FliZ (fliZ) (Bacillus subtilis (strain 168)).